Reading from the N-terminus, the 444-residue chain is tRNA-2-methylthio-N(6)-dimethylallyladenosine synthase (444 aa).

An MTTase N-terminal domain is found at 7-121 (KTFHVKSFGC…LPELIARAER (115 aa)). Residues cysteine 16, cysteine 52, cysteine 84, cysteine 158, cysteine 162, and cysteine 165 each contribute to the [4Fe-4S] cluster site. The Radical SAM core domain occupies 144–376 (GNQRPTAFLT…QALLNEQQQA (233 aa)). A TRAM domain is found at 379-441 (EATVGRTTRL…PNSLGAEPLM (63 aa)).

This sequence belongs to the methylthiotransferase family. MiaB subfamily. As to quaternary structure, monomer. Requires [4Fe-4S] cluster as cofactor.

The protein resides in the cytoplasm. It catalyses the reaction N(6)-dimethylallyladenosine(37) in tRNA + (sulfur carrier)-SH + AH2 + 2 S-adenosyl-L-methionine = 2-methylsulfanyl-N(6)-dimethylallyladenosine(37) in tRNA + (sulfur carrier)-H + 5'-deoxyadenosine + L-methionine + A + S-adenosyl-L-homocysteine + 2 H(+). Its function is as follows. Catalyzes the methylthiolation of N6-(dimethylallyl)adenosine (i(6)A), leading to the formation of 2-methylthio-N6-(dimethylallyl)adenosine (ms(2)i(6)A) at position 37 in tRNAs that read codons beginning with uridine. In Sphingopyxis alaskensis (strain DSM 13593 / LMG 18877 / RB2256) (Sphingomonas alaskensis), this protein is tRNA-2-methylthio-N(6)-dimethylallyladenosine synthase.